Reading from the N-terminus, the 871-residue chain is Speckle targeted PIP5K1A-regulated poly(A) polymerase (871 aa).

The Matrin-type zinc-finger motif lies at 16 to 46 (FRCCLCHITTANQPSLDAHLGGRKHRHLVEL). The RRM domain occupies 56–128 (RSVFVSGFPR…RRLRVRPREQ (73 aa)). Serine 205 contacts ATP. Mg(2+)-binding residues include aspartate 216 and aspartate 218. UTP-binding residues include aspartate 216 and aspartate 218. A disordered region spans residues 252-321 (QALACTPASP…QEDQGDGDQG (70 aa)). The segment covering 259–269 (ASPPDSQPPAS) has biased composition (pro residues). ATP is bound at residue asparagine 392. Residues asparagine 392, arginine 414, tyrosine 432, and histidine 547 each coordinate UTP. In terms of domain architecture, PAP-associated spans 489-547 (LSSLLAQFFSCVSCWDLRGSLLSLREGQALSVAGGLPSNLSEGLRLGPMNLQDPFDLSH). The segment at 596 to 871 (SSPSSILSAT…LPQALRNLLK (276 aa)) is KA1; binds the bulging loops of U6 snRNA but is dispensable for terminal uridylyltransferase activity. A disordered region spans residues 636-684 (GTKRLRSEGGGPGEPPQGGTSKRAKLDGQKKSCEEGPEEQQGCAGEHGE). A compositionally biased stretch (basic and acidic residues) spans 659–669 (AKLDGQKKSCE). Position 748 is a phosphoserine (serine 748).

The protein belongs to the DNA polymerase type-B-like family. In terms of assembly, associates with the cleavage and polyadenylation specificity factor (CPSF) complex. Interacts with CPSF1 and CPSF3; the interaction is direct. Interacts with PIP5K1A. Mg(2+) serves as cofactor. Mn(2+) is required as a cofactor. Phosphorylated by CK1 in the proline-rich (Pro-rich) region.

The protein resides in the nucleus. It is found in the nucleolus. It localises to the nucleus speckle. The catalysed reaction is RNA(n) + UTP = RNA(n)-3'-uridine ribonucleotide + diphosphate. It catalyses the reaction RNA(n) + ATP = RNA(n)-3'-adenine ribonucleotide + diphosphate. Adenylyltransferase activity is specifically phosphatidylinositol 4,5-bisphosphate (PtdIns(4,5)P2). Functionally, poly(A) polymerase that creates the 3'-poly(A) tail of specific pre-mRNAs. Localizes to nuclear speckles together with PIP5K1A and mediates polyadenylation of a select set of mRNAs, such as HMOX1. In addition to polyadenylation, it is also required for the 3'-end cleavage of pre-mRNAs: binds to the 3'UTR of targeted pre-mRNAs and promotes the recruitment and assembly of the CPSF complex on the 3'UTR of pre-mRNAs. In addition to adenylyltransferase activity, also has uridylyltransferase activity. However, the ATP ratio is higher than UTP in cells, suggesting that it functions primarily as a poly(A) polymerase. Acts as a specific terminal uridylyltransferase for U6 snRNA in vitro: responsible for a controlled elongation reaction that results in the restoration of the four 3'-terminal UMP-residues found in newly transcribed U6 snRNA. Not involved in replication-dependent histone mRNA degradation. In Bos taurus (Bovine), this protein is Speckle targeted PIP5K1A-regulated poly(A) polymerase (TUT1).